Here is a 553-residue protein sequence, read N- to C-terminus: Arylsulfatase K (553 aa).

The N-terminal stretch at 1–16 (MLLLLVSVVAALALAA) is a signal peptide. Positions 40 and 80 each coordinate Ca(2+). The Nucleophile role is filled by Cys-80. At Cys-80 the chain carries 3-oxoalanine (Cys). N-linked (GlcNAc...) asparagine glycosylation occurs at Asn-108. Residue Lys-128 participates in substrate binding. Asn-191 carries N-linked (GlcNAc...) asparagine glycosylation. Residue His-249 coordinates substrate. An N-linked (GlcNAc...) asparagine glycan is attached at Asn-260. Asp-311 and His-312 together coordinate Ca(2+). Asn-373, Asn-411, and Asn-496 each carry an N-linked (GlcNAc...) asparagine glycan. The interval 530–553 (SPLASSPTQSTSGSQPTLPQSTSG) is disordered. The span at 534–553 (SSPTQSTSGSQPTLPQSTSG) shows a compositional bias: low complexity.

It belongs to the sulfatase family. The cofactor is Ca(2+). Post-translationally, the conversion to 3-oxoalanine (also known as C-formylglycine, FGly), of a serine or cysteine residue in prokaryotes and of a cysteine residue in eukaryotes, is critical for catalytic activity. The 75-kDa precursor undergoes proteolytic processing to yield a 23 kDa form. In terms of processing, N-glycosylated with both high mannose and complex type sugars.

Its subcellular location is the secreted. It localises to the lysosome. The catalysed reaction is an aryl sulfate + H2O = a phenol + sulfate + H(+). It catalyses the reaction Hydrolysis of the 2-sulfate groups of the 2-O-sulfo-D-glucuronate residues of chondroitin sulfate, heparin and heparitin sulfate.. Its function is as follows. Catalyzes the hydrolysis of pseudosubstrates such as p-nitrocatechol sulfate and p-nitrophenyl sulfate. Catalyzes the hydrolysis of the 2-sulfate groups of the 2-O-sulfo-D-glucuronate residues of chondroitin sulfate, heparin and heparitin sulfate. Acts selectively on 2-sulfoglucuronate and lacks activity against 2-sulfoiduronate. The sequence is that of Arylsulfatase K (Arsk) from Mus musculus (Mouse).